Here is a 514-residue protein sequence, read N- to C-terminus: Membrane-bound lytic murein transglycosylase F (514 aa).

Positions 1–30 (MLSNNPLITKFRELFTVALVLALLSGCQWQ) are cleaved as a signal peptide. A non-LT domain region spans residues 31–271 (DDNLTDLEKI…QLEEKYFGHV (241 aa)). An LT domain region spans residues 272–514 (GSFDYVDTRA…KTIEDPGPSQ (243 aa)). Residue E316 is part of the active site. The disordered stretch occupies residues 482 to 514 (PVPPRQANVDGSLNNEAAISSAEKTIEDPGPSQ). Polar residues predominate over residues 490–499 (VDGSLNNEAA).

The protein in the N-terminal section; belongs to the bacterial solute-binding protein 3 family. In the C-terminal section; belongs to the transglycosylase Slt family.

It is found in the cell outer membrane. It carries out the reaction Exolytic cleavage of the (1-&gt;4)-beta-glycosidic linkage between N-acetylmuramic acid (MurNAc) and N-acetylglucosamine (GlcNAc) residues in peptidoglycan, from either the reducing or the non-reducing ends of the peptidoglycan chains, with concomitant formation of a 1,6-anhydrobond in the MurNAc residue.. Functionally, murein-degrading enzyme that degrades murein glycan strands and insoluble, high-molecular weight murein sacculi, with the concomitant formation of a 1,6-anhydromuramoyl product. Lytic transglycosylases (LTs) play an integral role in the metabolism of the peptidoglycan (PG) sacculus. Their lytic action creates space within the PG sacculus to allow for its expansion as well as for the insertion of various structures such as secretion systems and flagella. This Photobacterium profundum (strain SS9) protein is Membrane-bound lytic murein transglycosylase F.